Reading from the N-terminus, the 147-residue chain is Large ribosomal subunit protein uL13 (147 aa).

Belongs to the universal ribosomal protein uL13 family. In terms of assembly, part of the 50S ribosomal subunit.

Its function is as follows. This protein is one of the early assembly proteins of the 50S ribosomal subunit, although it is not seen to bind rRNA by itself. It is important during the early stages of 50S assembly. The chain is Large ribosomal subunit protein uL13 from Rhodococcus erythropolis (strain PR4 / NBRC 100887).